Here is a 370-residue protein sequence, read N- to C-terminus: Queuine tRNA-ribosyltransferase (370 aa).

Asp-89 functions as the Proton acceptor in the catalytic mechanism. Substrate contacts are provided by residues 89-93, Asp-143, Gln-185, and Gly-212; that span reads DSGGF. The segment at 243 to 249 is RNA binding; sequence GVGKPED. The Nucleophile role is filled by Asp-262. The tract at residues 267–271 is RNA binding; important for wobble base 34 recognition; that stretch reads TRNAR. Zn(2+) is bound by residues Cys-300, Cys-302, Cys-305, and His-331.

The protein belongs to the queuine tRNA-ribosyltransferase family. In terms of assembly, homodimer. Within each dimer, one monomer is responsible for RNA recognition and catalysis, while the other monomer binds to the replacement base PreQ1. Zn(2+) serves as cofactor.

It carries out the reaction 7-aminomethyl-7-carbaguanine + guanosine(34) in tRNA = 7-aminomethyl-7-carbaguanosine(34) in tRNA + guanine. It functions in the pathway tRNA modification; tRNA-queuosine biosynthesis. Catalyzes the base-exchange of a guanine (G) residue with the queuine precursor 7-aminomethyl-7-deazaguanine (PreQ1) at position 34 (anticodon wobble position) in tRNAs with GU(N) anticodons (tRNA-Asp, -Asn, -His and -Tyr). Catalysis occurs through a double-displacement mechanism. The nucleophile active site attacks the C1' of nucleotide 34 to detach the guanine base from the RNA, forming a covalent enzyme-RNA intermediate. The proton acceptor active site deprotonates the incoming PreQ1, allowing a nucleophilic attack on the C1' of the ribose to form the product. After dissociation, two additional enzymatic reactions on the tRNA convert PreQ1 to queuine (Q), resulting in the hypermodified nucleoside queuosine (7-(((4,5-cis-dihydroxy-2-cyclopenten-1-yl)amino)methyl)-7-deazaguanosine). This Pseudoalteromonas atlantica (strain T6c / ATCC BAA-1087) protein is Queuine tRNA-ribosyltransferase.